We begin with the raw amino-acid sequence, 413 residues long: Aspartate aminotransferase, cytoplasmic (413 aa).

Gly-39 and Trp-141 together coordinate L-aspartate. Ser-149 is modified (phosphoserine). An L-aspartate-binding site is contributed by Asn-195. Lys-259 is subject to N6-(pyridoxal phosphate)lysine. Residue Lys-318 is modified to N6-succinyllysine. Arg-387 contacts L-aspartate.

This sequence belongs to the class-I pyridoxal-phosphate-dependent aminotransferase family. In terms of assembly, homodimer. Requires pyridoxal 5'-phosphate as cofactor. Expressed in neurons of the retina. Localizes to the inner and outer plexiform layers, the inner and outer nuclear layer and the outer segments of photoreceptors.

The protein localises to the cytoplasm. It catalyses the reaction L-aspartate + 2-oxoglutarate = oxaloacetate + L-glutamate. The enzyme catalyses L-cysteine + 2-oxoglutarate = 2-oxo-3-sulfanylpropanoate + L-glutamate. It carries out the reaction (2S)-2-aminobutanoate + 2-oxoglutarate = 2-oxobutanoate + L-glutamate. The catalysed reaction is 3-sulfino-L-alanine + 2-oxoglutarate = 3-sulfinopyruvate + L-glutamate. Inhibited by calcium ions. In terms of biological role, biosynthesis of L-glutamate from L-aspartate or L-cysteine. Important regulator of levels of glutamate, the major excitatory neurotransmitter of the vertebrate central nervous system. Acts as a scavenger of glutamate in brain neuroprotection. The aspartate aminotransferase activity is involved in hepatic glucose synthesis during development and in adipocyte glyceroneogenesis. Using L-cysteine as substrate, regulates levels of mercaptopyruvate, an important source of hydrogen sulfide. Mercaptopyruvate is converted into H(2)S via the action of 3-mercaptopyruvate sulfurtransferase (3MST). Hydrogen sulfide is an important synaptic modulator and neuroprotectant in the brain. In Mus musculus (Mouse), this protein is Aspartate aminotransferase, cytoplasmic.